Reading from the N-terminus, the 381-residue chain is Guanine nucleotide-binding protein G(s) subunit alpha (381 aa).

C3 is lipidated: S-palmitoyl cysteine. In terms of domain architecture, G-alpha spans 36–381 (ALHRLLLLGA…RMHLQKYELL (346 aa)). Positions 39–52 (RLLLLGAGESGKST) are G1 motif. GTP is bound by residues 44 to 51 (GAGESGKS), 183 to 189 (LRCRVLT), 208 to 212 (GVGGQ), 277 to 280 (NKQD), and A353. Residues S51 and T189 each coordinate Mg(2+). Residues 181 to 189 (DILRCRVLT) are G2 motif. The interval 204–213 (FYMFGVGGQR) is G3 motif. Residues 273 to 280 (ILFLNKQD) form a G4 motif region. The G5 motif stretch occupies residues 351-356 (TTAVDT).

This sequence belongs to the G-alpha family. G(s) subfamily. G proteins are composed of 3 units; alpha, beta and gamma. The alpha chain contains the guanine nucleotide binding site.

In terms of biological role, guanine nucleotide-binding proteins (G proteins) are involved as modulators or transducers in various transmembrane signaling systems. The G(s) protein is involved in hormonal regulation of adenylate cyclase: it activates the cyclase in response to beta-adrenergic stimuli. This is Guanine nucleotide-binding protein G(s) subunit alpha from Geodia cydonium (Sponge).